A 212-amino-acid polypeptide reads, in one-letter code: Putative tyrosine-protein phosphatase R622 (212 aa).

The 183-residue stretch at 9–191 (KISQVTNNIF…LQGYQSKKEN (183 aa)) folds into the Tyrosine-protein phosphatase domain. Cys135 (phosphocysteine intermediate) is an active-site residue.

Belongs to the protein-tyrosine phosphatase family. Non-receptor class dual specificity subfamily.

It carries out the reaction O-phospho-L-tyrosyl-[protein] + H2O = L-tyrosyl-[protein] + phosphate. This chain is Putative tyrosine-protein phosphatase R622, found in Acanthamoeba polyphaga mimivirus (APMV).